Reading from the N-terminus, the 286-residue chain is Phosphatidylserine decarboxylase proenzyme (286 aa).

Catalysis depends on charge relay system; for autoendoproteolytic cleavage activity residues Asp90, His147, and Ser250. Ser250 serves as the catalytic Schiff-base intermediate with substrate; via pyruvic acid; for decarboxylase activity. At Ser250 the chain carries Pyruvic acid (Ser); by autocatalysis.

The protein belongs to the phosphatidylserine decarboxylase family. PSD-B subfamily. Prokaryotic type I sub-subfamily. Heterodimer of a large membrane-associated beta subunit and a small pyruvoyl-containing alpha subunit. Pyruvate serves as cofactor. In terms of processing, is synthesized initially as an inactive proenzyme. Formation of the active enzyme involves a self-maturation process in which the active site pyruvoyl group is generated from an internal serine residue via an autocatalytic post-translational modification. Two non-identical subunits are generated from the proenzyme in this reaction, and the pyruvate is formed at the N-terminus of the alpha chain, which is derived from the carboxyl end of the proenzyme. The autoendoproteolytic cleavage occurs by a canonical serine protease mechanism, in which the side chain hydroxyl group of the serine supplies its oxygen atom to form the C-terminus of the beta chain, while the remainder of the serine residue undergoes an oxidative deamination to produce ammonia and the pyruvoyl prosthetic group on the alpha chain. During this reaction, the Ser that is part of the protease active site of the proenzyme becomes the pyruvoyl prosthetic group, which constitutes an essential element of the active site of the mature decarboxylase.

It is found in the cell membrane. It carries out the reaction a 1,2-diacyl-sn-glycero-3-phospho-L-serine + H(+) = a 1,2-diacyl-sn-glycero-3-phosphoethanolamine + CO2. Its pathway is phospholipid metabolism; phosphatidylethanolamine biosynthesis; phosphatidylethanolamine from CDP-diacylglycerol: step 2/2. Functionally, catalyzes the formation of phosphatidylethanolamine (PtdEtn) from phosphatidylserine (PtdSer). The sequence is that of Phosphatidylserine decarboxylase proenzyme from Saccharophagus degradans (strain 2-40 / ATCC 43961 / DSM 17024).